Reading from the N-terminus, the 289-residue chain is Ribosomal protein L11 methyltransferase (289 aa).

Residues threonine 142, glycine 163, aspartate 185, and asparagine 226 each coordinate S-adenosyl-L-methionine.

It belongs to the methyltransferase superfamily. PrmA family.

It is found in the cytoplasm. It catalyses the reaction L-lysyl-[protein] + 3 S-adenosyl-L-methionine = N(6),N(6),N(6)-trimethyl-L-lysyl-[protein] + 3 S-adenosyl-L-homocysteine + 3 H(+). In terms of biological role, methylates ribosomal protein L11. This Legionella pneumophila (strain Paris) protein is Ribosomal protein L11 methyltransferase.